Consider the following 245-residue polypeptide: Pyridoxine 5'-phosphate synthase (245 aa).

Positions 8 and 19 each coordinate 3-amino-2-oxopropyl phosphate. The active-site Proton acceptor is His44. 1-deoxy-D-xylulose 5-phosphate contacts are provided by Arg46 and His51. The active-site Proton acceptor is the Glu76. Residue Thr106 coordinates 1-deoxy-D-xylulose 5-phosphate. His198 acts as the Proton donor in catalysis. 3-amino-2-oxopropyl phosphate is bound by residues Asp199 and 221-222; that span reads GH.

This sequence belongs to the PNP synthase family. As to quaternary structure, homooctamer; tetramer of dimers.

It is found in the cytoplasm. It carries out the reaction 3-amino-2-oxopropyl phosphate + 1-deoxy-D-xylulose 5-phosphate = pyridoxine 5'-phosphate + phosphate + 2 H2O + H(+). It participates in cofactor biosynthesis; pyridoxine 5'-phosphate biosynthesis; pyridoxine 5'-phosphate from D-erythrose 4-phosphate: step 5/5. Its function is as follows. Catalyzes the complicated ring closure reaction between the two acyclic compounds 1-deoxy-D-xylulose-5-phosphate (DXP) and 3-amino-2-oxopropyl phosphate (1-amino-acetone-3-phosphate or AAP) to form pyridoxine 5'-phosphate (PNP) and inorganic phosphate. This is Pyridoxine 5'-phosphate synthase from Brucella anthropi (strain ATCC 49188 / DSM 6882 / CCUG 24695 / JCM 21032 / LMG 3331 / NBRC 15819 / NCTC 12168 / Alc 37) (Ochrobactrum anthropi).